The following is a 137-amino-acid chain: Nucleoside diphosphate kinase (137 aa).

ATP is bound by residues lysine 9, phenylalanine 57, arginine 85, threonine 91, arginine 102, and asparagine 112. The active-site Pros-phosphohistidine intermediate is the histidine 115.

The protein belongs to the NDK family. As to quaternary structure, homotetramer. Requires Mg(2+) as cofactor.

Its subcellular location is the cytoplasm. The catalysed reaction is a 2'-deoxyribonucleoside 5'-diphosphate + ATP = a 2'-deoxyribonucleoside 5'-triphosphate + ADP. It carries out the reaction a ribonucleoside 5'-diphosphate + ATP = a ribonucleoside 5'-triphosphate + ADP. Functionally, major role in the synthesis of nucleoside triphosphates other than ATP. The ATP gamma phosphate is transferred to the NDP beta phosphate via a ping-pong mechanism, using a phosphorylated active-site intermediate. In Campylobacter concisus (strain 13826), this protein is Nucleoside diphosphate kinase.